Here is a 365-residue protein sequence, read N- to C-terminus: NADH-quinone oxidoreductase subunit D (365 aa).

It belongs to the complex I 49 kDa subunit family. NDH-1 is composed of 14 different subunits. Subunits NuoB, C, D, E, F, and G constitute the peripheral sector of the complex.

It is found in the cell membrane. The catalysed reaction is a quinone + NADH + 5 H(+)(in) = a quinol + NAD(+) + 4 H(+)(out). Functionally, NDH-1 shuttles electrons from NADH, via FMN and iron-sulfur (Fe-S) centers, to quinones in the respiratory chain. The immediate electron acceptor for the enzyme in this species is believed to be a menaquinone. Couples the redox reaction to proton translocation (for every two electrons transferred, four hydrogen ions are translocated across the cytoplasmic membrane), and thus conserves the redox energy in a proton gradient. This Carboxydothermus hydrogenoformans (strain ATCC BAA-161 / DSM 6008 / Z-2901) protein is NADH-quinone oxidoreductase subunit D.